A 173-amino-acid polypeptide reads, in one-letter code: ATP synthase subunit d, mitochondrial (173 aa).

A mitochondrion-targeting transit peptide spans 1-23; sequence MAARSAALKIDWVKVTSSLGLRG.

Belongs to the ATPase d subunit family. As to quaternary structure, F-type ATPases have 2 components, CF(1) - the catalytic core - and CF(0) - the membrane proton channel. In yeast, the dimeric form of ATP synthase consists of 17 polypeptides: alpha, beta, gamma, delta, epsilon, 4 (B), 5 (OSCP), 6 (A), 8, 9 (C), d, E (Tim11), f, g, h, i/j and k.

Its subcellular location is the mitochondrion inner membrane. In terms of biological role, mitochondrial membrane ATP synthase (F(1)F(0) ATP synthase or Complex V) produces ATP from ADP in the presence of a proton gradient across the membrane which is generated by electron transport complexes of the respiratory chain. F-type ATPases consist of two structural domains, F(1) - containing the extramembraneous catalytic core, and F(0) - containing the membrane proton channel, linked together by a central stalk and a peripheral stalk. During catalysis, ATP synthesis in the catalytic domain of F(1) is coupled via a rotary mechanism of the central stalk subunits to proton translocation. Part of the complex F(0) domain and the peripheric stalk, which acts as a stator to hold the catalytic alpha(3)beta(3) subcomplex and subunit a/ATP6 static relative to the rotary elements. The protein is ATP synthase subunit d, mitochondrial (atp7) of Aspergillus terreus (strain NIH 2624 / FGSC A1156).